The chain runs to 212 residues: Methylthioribulose-1-phosphate dehydratase (212 aa).

Zn(2+) contacts are provided by histidine 97 and histidine 99.

The protein belongs to the aldolase class II family. MtnB subfamily. As to quaternary structure, homotetramer. Requires Zn(2+) as cofactor.

It catalyses the reaction 5-(methylsulfanyl)-D-ribulose 1-phosphate = 5-methylsulfanyl-2,3-dioxopentyl phosphate + H2O. Its pathway is amino-acid biosynthesis; L-methionine biosynthesis via salvage pathway; L-methionine from S-methyl-5-thio-alpha-D-ribose 1-phosphate: step 2/6. Catalyzes the dehydration of methylthioribulose-1-phosphate (MTRu-1-P) into 2,3-diketo-5-methylthiopentyl-1-phosphate (DK-MTP-1-P). This is Methylthioribulose-1-phosphate dehydratase from Bacillus thuringiensis (strain Al Hakam).